The primary structure comprises 141 residues: Hemoglobin subunit alpha-D (141 aa).

The region spanning 1–141 (MLTAEDKKLI…VSAVLAEKYR (141 aa)) is the Globin domain. Heme b contacts are provided by H58 and H87.

Belongs to the globin family. As to quaternary structure, heterotetramer of two alpha-D chains and two beta chains. In terms of tissue distribution, red blood cells.

Its function is as follows. Involved in oxygen transport from the lung to the various peripheral tissues. This Meleagris gallopavo (Wild turkey) protein is Hemoglobin subunit alpha-D (HBAD).